A 259-amino-acid chain; its full sequence is Type III pantothenate kinase (259 aa).

6 to 13 (DCGNTNTL) is an ATP binding site. 108–111 (GADR) contacts substrate. D110 (proton acceptor) is an active-site residue. D130 is a K(+) binding site. Residue T133 coordinates ATP. Residue T185 participates in substrate binding.

The protein belongs to the type III pantothenate kinase family. In terms of assembly, homodimer. It depends on NH4(+) as a cofactor. K(+) is required as a cofactor.

Its subcellular location is the cytoplasm. The catalysed reaction is (R)-pantothenate + ATP = (R)-4'-phosphopantothenate + ADP + H(+). Its pathway is cofactor biosynthesis; coenzyme A biosynthesis; CoA from (R)-pantothenate: step 1/5. Functionally, catalyzes the phosphorylation of pantothenate (Pan), the first step in CoA biosynthesis. The chain is Type III pantothenate kinase from Maricaulis maris (strain MCS10) (Caulobacter maris).